The following is a 71-amino-acid chain: Large ribosomal subunit protein uL29 (71 aa).

The protein belongs to the universal ribosomal protein uL29 family. Part of the 50S ribosomal subunit. Interacts with protein L23.

In terms of biological role, stabilizes the tertiary rRNA structure within the 23S rRNA domain (domain I) to which it binds. Located at the polypeptide exit tunnel on the outside of the subunit. This is Large ribosomal subunit protein uL29 (rpl29) from Haloarcula marismortui (strain ATCC 43049 / DSM 3752 / JCM 8966 / VKM B-1809) (Halobacterium marismortui).